A 693-amino-acid polypeptide reads, in one-letter code: MARQVPLNRCRNIGIMAHIDAGKTTTTERVLFYTGITHRIGEVHEGTATMDYMEQEQERGITITSAATTCMWNNIRINIIDTPGHVDFTAEVERSLRVLDGAVALFDSVSGVQPQTETVWRQGDKYRVPRICFVNKMDKAGADFEHVIETIRKRLGARPVAIQIPIGAEANFKGVVDLIEMRAILWHDETMGAKYSVEEIPADLMKKAEAFRMQLIETVAENDDEMLHKFLEGETPTVEELKKALRKATIDMHVFPVLCGTAFKNKGVQTLLDAVVDYLPSPLDVPPVEGIDPSDTSVVMTREAKDDAPFSALGFKLINDPFGKLGFIRVYSGVLKTGDTVLNPRTGKTERVGRLVKMHANKREDITEIYAGDICAAVGLKELKTGDTLCATTDPIALSAIDFPEPVISVAVEPKTKGDQEKMGIALSKLADEDPTFKVRTDEDSGQTIISGMGELHLEILVDRMKREHKVEANVGEPKVAFRETIRKASEAEGKYIRQTGGSGNYGHVKIRLEPNEPGKGFEFIDAIKGGVVPREYIKPTEQGIREALQNGVLAGYEMVDVKATLFDGSYHDVDSNEMAFKIAGSMAFKEAAKKASPVLLEPVMSVEVTVPEEHMGTIIGDINSRRGRIEGMEHSGGSQVIRAIVPLKEMFGYVNDIRSSTQGRASYTMQFARYEEAPRMISEEIIGRNQGK.

The region spanning 8 to 283 (NRCRNIGIMA…AVVDYLPSPL (276 aa)) is the tr-type G domain. Residues 17 to 24 (AHIDAGKT), 81 to 85 (DTPGH), and 135 to 138 (NKMD) contribute to the GTP site.

This sequence belongs to the TRAFAC class translation factor GTPase superfamily. Classic translation factor GTPase family. EF-G/EF-2 subfamily.

The protein resides in the cytoplasm. Catalyzes the GTP-dependent ribosomal translocation step during translation elongation. During this step, the ribosome changes from the pre-translocational (PRE) to the post-translocational (POST) state as the newly formed A-site-bound peptidyl-tRNA and P-site-bound deacylated tRNA move to the P and E sites, respectively. Catalyzes the coordinated movement of the two tRNA molecules, the mRNA and conformational changes in the ribosome. In Acidobacterium capsulatum (strain ATCC 51196 / DSM 11244 / BCRC 80197 / JCM 7670 / NBRC 15755 / NCIMB 13165 / 161), this protein is Elongation factor G.